Consider the following 257-residue polypeptide: Transmembrane protein 101 (257 aa).

A run of 8 helical transmembrane segments spans residues 24-40, 52-72, 77-97, 110-130, 139-159, 182-202, 206-226, and 233-253; these read TRCP…LYAE, VPYL…MSFG, WFAL…YIGG, YSRT…AGEL, SLQS…AYSL, LFFV…YVTL, ILAV…SYWH, and FWNQ…AVIL.

It localises to the membrane. May activate NF-kappa-B signaling pathways. The sequence is that of Transmembrane protein 101 (Tmem101) from Mus musculus (Mouse).